A 301-amino-acid chain; its full sequence is Nodulation protein D 3 (301 aa).

An HTH lysR-type domain is found at 6 to 63 (LDLNLLVVLDALLTARNLTAAASSINLSQPAMSAAVARLRNYFNDELFTMSGRERVLT). A DNA-binding region (H-T-H motif) is located at residues 23–43 (LTAAASSINLSQPAMSAAVAR).

Belongs to the LysR transcriptional regulatory family.

Its function is as follows. NodD regulates the expression of the nodABCFE genes which encode other nodulation proteins. NodD is also a negative regulator of its own expression. Binds flavonoids as inducers. The polypeptide is Nodulation protein D 3 (nodD3) (Mesorhizobium japonicum (strain LMG 29417 / CECT 9101 / MAFF 303099) (Mesorhizobium loti (strain MAFF 303099))).